Reading from the N-terminus, the 1356-residue chain is RHO1 GDP-GTP exchange protein 2 (1356 aa).

Position 2 is an N-acetylserine (S2). Disordered regions lie at residues 74-94 (RRSG…EMKG) and 109-175 (EVPD…PRNE). S76 bears the Phosphoserine mark. Composition is skewed to polar residues over residues 109–125 (EVPD…TPVS) and 147–157 (HIYSTSNSASR). At S193 the chain carries Phosphoserine. 5 disordered regions span residues 202-291 (LKKQ…RSMS), 303-362 (SFQS…SSSN), 383-409 (SVSG…VMSA), 531-571 (GNHS…SQQK), and 626-645 (NISM…TSSV). Polar residues predominate over residues 204-221 (KQSSFSTGSASTTPTQAR). S223 carries the phosphoserine modification. Over residues 235 to 244 (SSKDLHEQHQ) the composition is skewed to basic and acidic residues. Residues 250–265 (QHNNINNHNNNNTNNN) show a composition bias toward low complexity. Residues 271–281 (VGSSNSNYPQH) show a composition bias toward polar residues. The span at 282-291 (SHSISSRSMS) shows a compositional bias: low complexity. Residues 303–325 (SFQSKTSNSRKATQKYDITSNPF) show a composition bias toward polar residues. The segment covering 329–338 (HHHHHHHHSS) has biased composition (basic residues). 2 stretches are compositionally biased toward low complexity: residues 339 to 362 (NSHS…SSSN) and 383 to 401 (SVSG…TPLS). A phosphoserine mark is found at S566 and S628. In terms of domain architecture, DH spans 659 to 846 (KRQEAIYEVY…RDFMKRIDQA (188 aa)). One can recognise a CNH domain in the interval 1034–1336 (TNKINSVTSC…RLLQTSTQEI (303 aa)).

Stimulates the exchange of RHO1 GDP-bound form into GTP-bound form. The sequence is that of RHO1 GDP-GTP exchange protein 2 (ROM2) from Saccharomyces cerevisiae (strain ATCC 204508 / S288c) (Baker's yeast).